We begin with the raw amino-acid sequence, 408 residues long: Argininosuccinate synthase (408 aa).

ATP is bound at residue 8–16 (AYSGGLDTT). Tyr-86 lines the L-citrulline pocket. Position 116 (Gly-116) interacts with ATP. 3 residues coordinate L-aspartate: Thr-118, Asn-122, and Asp-123. Asn-122 contacts L-citrulline. Residues Arg-126, Ser-177, Ser-186, Glu-263, and Tyr-275 each contribute to the L-citrulline site.

This sequence belongs to the argininosuccinate synthase family. Type 1 subfamily. As to quaternary structure, homotetramer.

The protein localises to the cytoplasm. The enzyme catalyses L-citrulline + L-aspartate + ATP = 2-(N(omega)-L-arginino)succinate + AMP + diphosphate + H(+). It functions in the pathway amino-acid biosynthesis; L-arginine biosynthesis; L-arginine from L-ornithine and carbamoyl phosphate: step 2/3. This chain is Argininosuccinate synthase, found in Agathobacter rectalis (strain ATCC 33656 / DSM 3377 / JCM 17463 / KCTC 5835 / VPI 0990) (Eubacterium rectale).